The sequence spans 185 residues: Capsid protein (185 aa).

Residues 136–185 (NAPILSTLPETTVVRRRDRGRSPRRRTPSPRRRRSPSPRRRRSQSRESQC) form a disordered region. The span at 149–178 (VRRRDRGRSPRRRTPSPRRRRSPSPRRRRS) shows a compositional bias: basic residues. Residues Ser157, Ser164, and Ser172 each carry the phosphoserine; by host modification. A 1; half-length repeat occupies 157–163 (SPRRRTP). The segment at 157–179 (SPRRRTPSPRRRRSPSPRRRRSQ) is 3 X 8 AA repeats of S-P-R-R-R-[PR]-S-Q. The Bipartite nuclear localization signal signature appears at 160 to 177 (RRTPSPRRRRSPSPRRRR). 2 consecutive repeat copies span residues 164–171 (SPRRRRSP) and 172–179 (SPRRRRSQ). The interval 179–185 (QSRESQC) is RNA binding.

The protein belongs to the orthohepadnavirus core antigen family. Homodimerizes, then multimerizes. Interacts with cytosol exposed regions of viral L glycoprotein present in the reticulum-to-Golgi compartment. Interacts with human FLNB. Phosphorylated form interacts with host importin alpha; this interaction depends on the exposure of the NLS, which itself depends upon genome maturation and/or phosphorylation of the capsid protein. Interacts with host NUP153. In terms of processing, phosphorylated by host SRPK1, SRPK2, and maybe protein kinase C or GAPDH. Phosphorylation is critical for pregenomic RNA packaging. Protein kinase C phosphorylation is stimulated by HBx protein and may play a role in transport of the viral genome to the nucleus at the late step during the viral replication cycle.

The protein localises to the virion. Its subcellular location is the host cytoplasm. Functionally, self assembles to form an icosahedral capsid. Most capsids appear to be large particles with an icosahedral symmetry of T=4 and consist of 240 copies of capsid protein, though a fraction forms smaller T=3 particles consisting of 180 capsid proteins. Entering capsids are transported along microtubules to the nucleus. Phosphorylation of the capsid is thought to induce exposure of nuclear localization signal in the C-terminal portion of the capsid protein that allows binding to the nuclear pore complex via the importin (karyopherin-) alpha and beta. Capsids are imported in intact form through the nuclear pore into the nuclear basket, where it probably binds NUP153. Only capsids that contain the mature viral genome can release the viral DNA and capsid protein into the nucleoplasm. Immature capsids get stuck in the basket. Capsids encapsulate the pre-genomic RNA and the P protein. Pre-genomic RNA is reverse-transcribed into DNA while the capsid is still in the cytoplasm. The capsid can then either be directed to the nucleus, providing more genomes for transcription, or bud through the endoplasmic reticulum to provide new virions. The sequence is that of Capsid protein from Hepatitis B virus genotype A2 subtype adw2 (strain Rutter 1979) (HBV-A).